We begin with the raw amino-acid sequence, 145 residues long: Basic leucine zipper 1 (145 aa).

Over residues 1 to 11 the composition is skewed to polar residues; it reads MANAEKTSSGS. A disordered region spans residues 1–39; the sequence is MANAEKTSSGSDIDEKKRKRKLSNRESARRSRLKKQKLM. Positions 14–77 constitute a bZIP domain; sequence DEKKRKRKLS…DSVETENAGL (64 aa). Residues 16-37 are basic motif; that stretch reads KKRKRKLSNRESARRSRLKKQK. The interval 46–53 is leucine-zipper; it reads ISSLERRI.

This sequence belongs to the bZIP family. Interacts with ZFP7, BZIP4, BZIP9, BZIP10, BZIP11, BZIP25, BZIP42, BZIP44, BZIP53, BZIP58 and BZIP63. In terms of tissue distribution, expressed in both shoots, including young leaves, stipulae and trichomes (except in cotyledons and hypocotyl), and roots, including vascular tissues (e.g. in both the phloem and the xylem). Present in seeds and pollen. Restricted to vasculatures and roots in the presence of sucrose or glucose.

The protein resides in the nucleus. Its function is as follows. Transcription factor that binds to the C-box-like motif (5'-TGCTGACGTCA-3') and G-box-like motif (5'-CCACGTGGCC-3'), ABRE elements, of gene promoters involved in sugar signaling. Activated by low energy stress both at transcriptional and post-transcriptional mechanisms. Promotes dark-induced senescence and participates in the transcriptional reprogramming of amino acid metabolism during the dark-induced starvation response. Transcription activator of the mannan synthase CSLA9. Recognizes and binds to DNA-specific sequence of CSLA9 promoter. This is Basic leucine zipper 1 (BZIP1) from Arabidopsis thaliana (Mouse-ear cress).